The sequence spans 576 residues: Proline--tRNA ligase (576 aa).

This sequence belongs to the class-II aminoacyl-tRNA synthetase family. ProS type 1 subfamily. In terms of assembly, homodimer.

It localises to the cytoplasm. The catalysed reaction is tRNA(Pro) + L-proline + ATP = L-prolyl-tRNA(Pro) + AMP + diphosphate. Its function is as follows. Catalyzes the attachment of proline to tRNA(Pro) in a two-step reaction: proline is first activated by ATP to form Pro-AMP and then transferred to the acceptor end of tRNA(Pro). As ProRS can inadvertently accommodate and process non-cognate amino acids such as alanine and cysteine, to avoid such errors it has two additional distinct editing activities against alanine. One activity is designated as 'pretransfer' editing and involves the tRNA(Pro)-independent hydrolysis of activated Ala-AMP. The other activity is designated 'posttransfer' editing and involves deacylation of mischarged Ala-tRNA(Pro). The misacylated Cys-tRNA(Pro) is not edited by ProRS. The sequence is that of Proline--tRNA ligase from Leptospira interrogans serogroup Icterohaemorrhagiae serovar copenhageni (strain Fiocruz L1-130).